The sequence spans 305 residues: Tetraacyldisaccharide 4'-kinase (305 aa).

An ATP-binding site is contributed by Ser-39–Thr-46.

It belongs to the LpxK family.

It carries out the reaction a lipid A disaccharide + ATP = a lipid IVA + ADP + H(+). It functions in the pathway glycolipid biosynthesis; lipid IV(A) biosynthesis; lipid IV(A) from (3R)-3-hydroxytetradecanoyl-[acyl-carrier-protein] and UDP-N-acetyl-alpha-D-glucosamine: step 6/6. Transfers the gamma-phosphate of ATP to the 4'-position of a tetraacyldisaccharide 1-phosphate intermediate (termed DS-1-P) to form tetraacyldisaccharide 1,4'-bis-phosphate (lipid IVA). The chain is Tetraacyldisaccharide 4'-kinase from Pseudoalteromonas atlantica (strain T6c / ATCC BAA-1087).